The primary structure comprises 779 residues: Translation initiation factor IF-2 (779 aa).

Residues 44–193 (RQLDNAVDGT…TPPKPKELPE (150 aa)) are disordered. The span at 53 to 65 (TNKKAEAPKKETT) shows a compositional bias: basic and acidic residues. Polar residues predominate over residues 66-81 (SNENGNSKGPNKPNMT). Composition is skewed to low complexity over residues 82-93 (NSNEKSNKPNKP) and 117-167 (ANTS…NNKG). The 170-residue stretch at 280-449 (ERPPVVTIMG…LLVSEVEELK (170 aa)) folds into the tr-type G domain. The tract at residues 289-296 (GHVDHGKT) is G1. 289 to 296 (GHVDHGKT) contributes to the GTP binding site. Positions 314–318 (GITQH) are G2. Residues 335–338 (DTPG) are G3. GTP-binding positions include 335 to 339 (DTPGH) and 389 to 392 (NKID). The G4 stretch occupies residues 389-392 (NKID). Positions 425–427 (SAK) are G5.

It belongs to the TRAFAC class translation factor GTPase superfamily. Classic translation factor GTPase family. IF-2 subfamily.

It is found in the cytoplasm. Its function is as follows. One of the essential components for the initiation of protein synthesis. Protects formylmethionyl-tRNA from spontaneous hydrolysis and promotes its binding to the 30S ribosomal subunits. Also involved in the hydrolysis of GTP during the formation of the 70S ribosomal complex. The protein is Translation initiation factor IF-2 of Listeria monocytogenes serovar 1/2a (strain ATCC BAA-679 / EGD-e).